The following is a 274-amino-acid chain: Thiamine kinase (274 aa).

Belongs to the thiamine kinase family.

The enzyme catalyses thiamine + ATP = thiamine phosphate + ADP + H(+). It functions in the pathway cofactor biosynthesis; thiamine diphosphate biosynthesis; thiamine phosphate from thiamine: step 1/1. In terms of biological role, catalyzes the ATP-dependent phosphorylation of thiamine to thiamine phosphate. Is involved in thiamine salvage. The polypeptide is Thiamine kinase (Escherichia coli O157:H7).